The sequence spans 426 residues: 26S proteasome regulatory subunit 7 (426 aa).

209 to 216 (GPPGTGKT) is a binding site for ATP.

This sequence belongs to the AAA ATPase family.

The protein localises to the cytoplasm. The protein resides in the nucleus. Its function is as follows. The 26S proteasome is involved in the ATP-dependent degradation of ubiquitinated proteins. The regulatory (or ATPase) complex confers ATP dependency and substrate specificity to the 26S complex. The chain is 26S proteasome regulatory subunit 7 (RPT1) from Spinacia oleracea (Spinach).